The following is a 70-amino-acid chain: Melittin (70 aa).

The first 21 residues, 1 to 21, serve as a signal peptide directing secretion; it reads MKFLVNVALVFMVVYISYIYA. Residues 22-43 constitute a propeptide, removed by a dipeptidylpeptidase; sequence APEPEPAPEPEAEADAEADPEA. Gly44 is subject to N-formylglycine; partial. Gln69 bears the Glutamine amide mark.

Belongs to the melittin family. Monomer (in solution and for integration into membranes), homotetramer (in solution and potentially as a toroidal pore in membranes), and potenially homomultimer (as a toroidal pore in membranes). In terms of tissue distribution, expressed by the venom gland.

The protein resides in the secreted. It is found in the target cell membrane. Functionally, melittin: Main toxin of bee venom with strong antimicrobial activity and hemolytic activity. It has enhancing effects on bee venom phospholipase A2 activity. This amphipathic toxin binds to negatively charged membrane surface and forms pore by inserting into lipid bilayers inducing the leakage of ions and molecules and the enhancement of permeability that ultimately leads to cell lysis. It acts as a voltage-gated pore with higher selectivity for anions over cations. The ion conductance has been shown to be voltage-dependent. Self-association of melittin in membranes is promoted by high ionic strength, but not by the presence of negatively charged lipids. In vivo, intradermal injection into healthy human volunteers produce sharp pain sensation and an inflammatory response. It produces pain by activating primary nociceptor cells directly and indirectly due to its ability to activate plasma membrane phospholipase A2 and its pore-forming activity. In the context of inflammation and cancer tests, is highly cytotoxic to normal cells, highly induces calcium signaling and almost completely prevents cAMP production. In addition, prevents LPS-induced nitric oxid (NO) synthesis but does not affect the IP3 signaling and pro-inflammatory activation of endothelial cells. Also shows significant antiproliferative activity on the breast cancer cell line MDA-MB-231. In terms of biological role, melittin-S: 1.4-fold less hemolytic and adopts a less organized secondary structure than melittin. Its function is as follows. Melittin-2: Has strong hemolytic activity. In Apis mellifera (Honeybee), this protein is Melittin (MELT).